The primary structure comprises 235 residues: Carbohydrate deacetylase (235 aa).

Histidine 61 and histidine 124 together coordinate Mg(2+).

Belongs to the YdjC deacetylase family. Mg(2+) serves as cofactor.

In terms of biological role, probably catalyzes the deacetylation of acetylated carbohydrates an important step in the degradation of oligosaccharides. This is Carbohydrate deacetylase from Bacillus cereus (strain B4264).